The following is a 603-amino-acid chain: Aspartate--tRNA(Asp/Asn) ligase (603 aa).

Glu-187 provides a ligand contact to L-aspartate. The interval 211 to 214 is aspartate; that stretch reads QQFK. Positions 233 and 461 each coordinate L-aspartate. 233 to 235 contributes to the ATP binding site; the sequence is RDE. Glu-495 is an ATP binding site. Arg-502 lines the L-aspartate pocket. 547–550 provides a ligand contact to ATP; that stretch reads GLDR.

The protein belongs to the class-II aminoacyl-tRNA synthetase family. Type 1 subfamily. As to quaternary structure, homodimer.

The protein localises to the cytoplasm. The catalysed reaction is tRNA(Asx) + L-aspartate + ATP = L-aspartyl-tRNA(Asx) + AMP + diphosphate. In terms of biological role, aspartyl-tRNA synthetase with relaxed tRNA specificity since it is able to aspartylate not only its cognate tRNA(Asp) but also tRNA(Asn). Reaction proceeds in two steps: L-aspartate is first activated by ATP to form Asp-AMP and then transferred to the acceptor end of tRNA(Asp/Asn). The sequence is that of Aspartate--tRNA(Asp/Asn) ligase from Chlorobaculum parvum (strain DSM 263 / NCIMB 8327) (Chlorobium vibrioforme subsp. thiosulfatophilum).